The primary structure comprises 266 residues: Phosphatidylglycerol--prolipoprotein diacylglyceryl transferase (266 aa).

Helical transmembrane passes span 17-37, 56-76, 92-112, 120-140, 171-191, 199-219, and 233-253; these read LKIHWYGLMYLIGIGGAWLLA, LVFWVACGVILGGRLGYVLFY, WKGGMSFHGGLLGVMLAVWWF, FFQLMDFIAPLVPIGLGAGRI, PSQLYQFALEGVALFVILWLF, ASVSGLFVLCYGIFRFVVEFV, and WLTMGQVLCVPMVLAGIALMV. R139 serves as a coordination point for a 1,2-diacyl-sn-glycero-3-phospho-(1'-sn-glycerol).

It belongs to the Lgt family.

Its subcellular location is the cell inner membrane. It catalyses the reaction L-cysteinyl-[prolipoprotein] + a 1,2-diacyl-sn-glycero-3-phospho-(1'-sn-glycerol) = an S-1,2-diacyl-sn-glyceryl-L-cysteinyl-[prolipoprotein] + sn-glycerol 1-phosphate + H(+). It functions in the pathway protein modification; lipoprotein biosynthesis (diacylglyceryl transfer). Functionally, catalyzes the transfer of the diacylglyceryl group from phosphatidylglycerol to the sulfhydryl group of the N-terminal cysteine of a prolipoprotein, the first step in the formation of mature lipoproteins. The chain is Phosphatidylglycerol--prolipoprotein diacylglyceryl transferase from Pseudomonas aeruginosa (strain UCBPP-PA14).